A 102-amino-acid chain; its full sequence is Integration host factor subunit alpha (102 aa).

This sequence belongs to the bacterial histone-like protein family. In terms of assembly, heterodimer of an alpha and a beta chain.

In terms of biological role, this protein is one of the two subunits of integration host factor, a specific DNA-binding protein that functions in genetic recombination as well as in transcriptional and translational control. The sequence is that of Integration host factor subunit alpha from Albidiferax ferrireducens (strain ATCC BAA-621 / DSM 15236 / T118) (Rhodoferax ferrireducens).